We begin with the raw amino-acid sequence, 239 residues long: Purine nucleoside phosphorylase DeoD-type 1 (239 aa).

A purine D-ribonucleoside is bound at residue His5. Residues Gly21, Arg25, Arg44, and 88–91 (RVGS) each bind phosphate. Residues 180 to 182 (EME) and 204 to 205 (SD) contribute to the a purine D-ribonucleoside site. The active-site Proton donor is Asp205.

This sequence belongs to the PNP/UDP phosphorylase family. In terms of assembly, homohexamer; trimer of homodimers.

It catalyses the reaction a purine D-ribonucleoside + phosphate = a purine nucleobase + alpha-D-ribose 1-phosphate. It carries out the reaction a purine 2'-deoxy-D-ribonucleoside + phosphate = a purine nucleobase + 2-deoxy-alpha-D-ribose 1-phosphate. Catalyzes the reversible phosphorolytic breakdown of the N-glycosidic bond in the beta-(deoxy)ribonucleoside molecules, with the formation of the corresponding free purine bases and pentose-1-phosphate. The chain is Purine nucleoside phosphorylase DeoD-type 1 from Vibrio vulnificus (strain CMCP6).